An 826-amino-acid chain; its full sequence is DEAD-box ATP-dependent RNA helicase 13 (826 aa).

A compositionally biased stretch (basic and acidic residues) spans 1 to 10 (MVTGDKESSL). 2 disordered regions span residues 1–62 (MVTG…QLDG) and 76–175 (HLTL…GDDT). Residues 11 to 22 (MKKRNKRSHKRK) are compositionally biased toward basic residues. Polar residues predominate over residues 49-58 (SFSTLFSGSG). A compositionally biased stretch (acidic residues) spans 94–128 (EDDDDTNETVDEMIEGEEAEEDGEGRDDEDDEDDE). Residues 125–166 (EDDEETRKKKEKKAKRNKEKKKEKKKKKQKKINEAAKNQDAS) are a coiled coil. Basic residues predominate over residues 133 to 154 (KKEKKAKRNKEKKKEKKKKKQK). Residues 190 to 218 (SAWSSMRLHPLLMKSIYRLDFKEPTKIQK) carry the Q motif motif. The 218-residue stretch at 222–439 (NVAAYQGKDV…KLKRGSSKSK (218 aa)) folds into the Helicase ATP-binding domain. ATP is bound at residue 235-242 (AETGSGKT). A DEAD box motif is present at residues 363 to 366 (DEAD). The 169-residue stretch at 476 to 644 (KIEESFIKCE…YMPAVRKRLY (169 aa)) folds into the Helicase C-terminal domain. Coiled-coil stretches lie at residues 666 to 712 (LKKH…TLLS) and 783 to 810 (KMKG…IGRR). Residues 783–826 (KMKGQSAEKRRDIASLKKKRKEEKIGRRDQRRNQKKQRKLMASS) form a disordered region. 2 stretches are compositionally biased toward basic and acidic residues: residues 788–797 (SAEKRRDIAS) and 804–814 (EEKIGRRDQRR). Residues 815–826 (NQKKQRKLMASS) show a composition bias toward basic residues.

Belongs to the DEAD box helicase family. DDX24/MAK5 subfamily.

The enzyme catalyses ATP + H2O = ADP + phosphate + H(+). This is DEAD-box ATP-dependent RNA helicase 13 (RH13) from Arabidopsis thaliana (Mouse-ear cress).